Consider the following 221-residue polypeptide: Fanconi anemia core complex-associated protein 24 (221 aa).

As to quaternary structure, belongs to the multisubunit FA complex composed of FANCA, FANCB, FANCC, FANCE, FANCF, FANCG, FANCL/PHF9, FANCM and FAAP24. Interacts with FANCM.

It localises to the nucleus. In terms of biological role, plays a role in DNA repair through recruitment of the FA core complex to damaged DNA. Regulates FANCD2 monoubiquitination upon DNA damage. Induces chromosomal instability as well as hypersensitivity to DNA cross-linking agents, when repressed. Targets FANCM/FAAP24 complex to the DNA, preferentially to single strand DNA. This chain is Fanconi anemia core complex-associated protein 24, found in Mus musculus (Mouse).